Consider the following 339-residue polypeptide: Uroporphyrinogen decarboxylase (339 aa).

Residues 21–25 (RQAGR), D71, Y147, S202, and H315 each bind substrate.

It belongs to the uroporphyrinogen decarboxylase family. Homodimer.

The protein localises to the cytoplasm. It carries out the reaction uroporphyrinogen III + 4 H(+) = coproporphyrinogen III + 4 CO2. It functions in the pathway porphyrin-containing compound metabolism; protoporphyrin-IX biosynthesis; coproporphyrinogen-III from 5-aminolevulinate: step 4/4. Functionally, catalyzes the decarboxylation of four acetate groups of uroporphyrinogen-III to yield coproporphyrinogen-III. The sequence is that of Uroporphyrinogen decarboxylase from Helicobacter pylori (strain Shi470).